A 257-amino-acid chain; its full sequence is Hydroxyacylglutathione hydrolase (257 aa).

Residues His-54, His-56, Asp-58, His-59, His-113, Asp-137, and His-175 each contribute to the Zn(2+) site.

It belongs to the metallo-beta-lactamase superfamily. Glyoxalase II family. Monomer. Zn(2+) is required as a cofactor.

The enzyme catalyses an S-(2-hydroxyacyl)glutathione + H2O = a 2-hydroxy carboxylate + glutathione + H(+). The protein operates within secondary metabolite metabolism; methylglyoxal degradation; (R)-lactate from methylglyoxal: step 2/2. In terms of biological role, thiolesterase that catalyzes the hydrolysis of S-D-lactoyl-glutathione to form glutathione and D-lactic acid. The chain is Hydroxyacylglutathione hydrolase from Microcystis aeruginosa (strain NIES-843 / IAM M-2473).